The chain runs to 378 residues: Putative glutamate--cysteine ligase 2 (378 aa).

It belongs to the glutamate--cysteine ligase type 2 family. YbdK subfamily.

It catalyses the reaction L-cysteine + L-glutamate + ATP = gamma-L-glutamyl-L-cysteine + ADP + phosphate + H(+). Functionally, ATP-dependent carboxylate-amine ligase which exhibits weak glutamate--cysteine ligase activity. The protein is Putative glutamate--cysteine ligase 2 of Leifsonia xyli subsp. xyli (strain CTCB07).